Consider the following 372-residue polypeptide: NAD(P)H-quinone oxidoreductase subunit 1 (372 aa).

The next 9 membrane-spanning stretches (helical) occupy residues Thr-27 to Val-47, Pro-65 to Phe-85, Trp-97 to Val-117, Leu-128 to Met-148, Leu-176 to Val-196, Ile-204 to Leu-224, Tyr-249 to Ser-269, Gly-308 to Leu-328, and Val-351 to Gly-371.

The protein belongs to the complex I subunit 1 family. NDH-1 is composed of at least 11 different subunits.

The protein resides in the cellular thylakoid membrane. The catalysed reaction is a plastoquinone + NADH + (n+1) H(+)(in) = a plastoquinol + NAD(+) + n H(+)(out). It carries out the reaction a plastoquinone + NADPH + (n+1) H(+)(in) = a plastoquinol + NADP(+) + n H(+)(out). NDH-1 shuttles electrons from an unknown electron donor, via FMN and iron-sulfur (Fe-S) centers, to quinones in the respiratory and/or the photosynthetic chain. The immediate electron acceptor for the enzyme in this species is believed to be plastoquinone. Couples the redox reaction to proton translocation, and thus conserves the redox energy in a proton gradient. The sequence is that of NAD(P)H-quinone oxidoreductase subunit 1 from Acaryochloris marina (strain MBIC 11017).